The primary structure comprises 328 residues: DNA-directed RNA polymerase subunit alpha (328 aa).

The alpha N-terminal domain (alpha-NTD) stretch occupies residues 1–234 (MQNSTTEFLK…DQMSIFADLQ (234 aa)). The interval 248-328 (IDPVLLRPVD…AWPPVGLEKP (81 aa)) is alpha C-terminal domain (alpha-CTD).

This sequence belongs to the RNA polymerase alpha chain family. As to quaternary structure, homodimer. The RNAP catalytic core consists of 2 alpha, 1 beta, 1 beta' and 1 omega subunit. When a sigma factor is associated with the core the holoenzyme is formed, which can initiate transcription.

It catalyses the reaction RNA(n) + a ribonucleoside 5'-triphosphate = RNA(n+1) + diphosphate. DNA-dependent RNA polymerase catalyzes the transcription of DNA into RNA using the four ribonucleoside triphosphates as substrates. This chain is DNA-directed RNA polymerase subunit alpha, found in Neisseria meningitidis serogroup A / serotype 4A (strain DSM 15465 / Z2491).